Consider the following 156-residue polypeptide: ATP synthase subunit b (156 aa).

A helical transmembrane segment spans residues 7 to 29 (LLGQAISFGMFVWFCMKYVWPPI).

It belongs to the ATPase B chain family. F-type ATPases have 2 components, F(1) - the catalytic core - and F(0) - the membrane proton channel. F(1) has five subunits: alpha(3), beta(3), gamma(1), delta(1), epsilon(1). F(0) has three main subunits: a(1), b(2) and c(10-14). The alpha and beta chains form an alternating ring which encloses part of the gamma chain. F(1) is attached to F(0) by a central stalk formed by the gamma and epsilon chains, while a peripheral stalk is formed by the delta and b chains.

It is found in the cell inner membrane. In terms of biological role, f(1)F(0) ATP synthase produces ATP from ADP in the presence of a proton or sodium gradient. F-type ATPases consist of two structural domains, F(1) containing the extramembraneous catalytic core and F(0) containing the membrane proton channel, linked together by a central stalk and a peripheral stalk. During catalysis, ATP synthesis in the catalytic domain of F(1) is coupled via a rotary mechanism of the central stalk subunits to proton translocation. Its function is as follows. Component of the F(0) channel, it forms part of the peripheral stalk, linking F(1) to F(0). This Vibrio cholerae serotype O1 (strain ATCC 39541 / Classical Ogawa 395 / O395) protein is ATP synthase subunit b.